Here is an 829-residue protein sequence, read N- to C-terminus: Probable beta-glucosidase H (829 aa).

The active site involves aspartate 225. In terms of domain architecture, PA14 spans 389 to 548; it reads RMLSNAVIRF…DPEQMVRDAV (160 aa). Asparagine 416, asparagine 431, asparagine 473, asparagine 602, and asparagine 627 each carry an N-linked (GlcNAc...) asparagine glycan.

Belongs to the glycosyl hydrolase 3 family.

It is found in the secreted. It catalyses the reaction Hydrolysis of terminal, non-reducing beta-D-glucosyl residues with release of beta-D-glucose.. The protein operates within glycan metabolism; cellulose degradation. In terms of biological role, beta-glucosidases are one of a number of cellulolytic enzymes involved in the degradation of cellulosic biomass. Catalyzes the last step releasing glucose from the inhibitory cellobiose. The sequence is that of Probable beta-glucosidase H (bglH) from Aspergillus clavatus (strain ATCC 1007 / CBS 513.65 / DSM 816 / NCTC 3887 / NRRL 1 / QM 1276 / 107).